An 802-amino-acid polypeptide reads, in one-letter code: MYRSTKGASKARRDQINAEIRNLKELLPLAEADKVRLSYLHIMSLACIYTRKGVFFAGGTPLAGPTGLLSAQELEDIVAALPGFLLVFTAEGKLLYLSESVSEHLGHSMVDLVAQGDSIYDIIDPADHLTVRQQLTLPSALDTDRLFRCRFNTSKSLRRQSAGNKLVLIRGRFHAHPPGAYWAGNPVFTAFCAPLEPRPRPGPGPGPGPASLFLAMFQSRHAKDLALLDISESVLIYLGFERSELLCKSWYGLLHPEDLAHASAQHYRLLAESGDIQAEMVVRLQAKTGGWAWIYCLLYSEGPEGPITANNYPISDMEAWSLRQQLNSEDTQAAYVLGTPTMLPSFPENILSQEECSSTNPLFTAALGAPRSTSFPSAPELSVVSASEELPRPSKELDFSYLTFPSGPEPSLQAELSKDLVCTPPYTPHQPGGCAFLFSLHEPFQTHLPTPSSTLQEQLTPSTATFSDQLTPSSATFPDPLTSPLQGQLTETSVRSYEDQLTPCTSTFPDQLLPSTATFPEPLGSPAHEQLTPPSTAFQAHLDSPSQTFPEQLSPNPTKTYFAQEGCSFLYEKLPPSPSSPGNGDCTLLALAQLRGPLSVDVPLVPEGLLTPEASPVKQSFFHYSEKEQNEIDRLIQQISQLAQGMDRPFSAEAGTGGLEPLGGLEPLDSNLSLSGAGPPVLSLDLKPWKCQELDFLADPDNMFLEETPVEDIFMDLSTPDPSEEWGSGDPEAEGPGGAPSPCNNLSPEDHSFLEDLATYETAFETGVSAFPYDGFTDELHQLQSQVQDSFHEDGSGGEPTF.

The interval 1–13 (MYRSTKGASKARR) is basic motif; degenerate. Residues 1–53 (MYRSTKGASKARRDQINAEIRNLKELLPLAEADKVRLSYLHIMSLACIYTRKG) form the bHLH domain. Residues 5-38 (TKGASKARRDQINAEIRNLKELLPLAEADKVRLS) are a coiled coil. Residues 14–53 (DQINAEIRNLKELLPLAEADKVRLSYLHIMSLACIYTRKG) form a helix-loop-helix motif region. PAS domains follow at residues 70 to 144 (SAQE…LDTD) and 203 to 273 (PGPG…LAES). In terms of domain architecture, PAC spans 278–317 (AEMVVRLQAKTGGWAWIYCLLYSEGPEGPITANNYPISDM). Polar residues-rich tracts occupy residues 466 to 476 (FSDQLTPSSAT), 506 to 518 (STFPDQLLPSTAT), and 532 to 555 (TPPSTAFQAHLDSPSQTFPEQLSP). Disordered stretches follow at residues 466-485 (FSDQLTPSSATFPDPLTSPL) and 506-555 (STFP…QLSP). Residues 624–648 (YSEKEQNEIDRLIQQISQLAQGMDR) adopt a coiled-coil conformation. Residues 717–749 (LSTPDPSEEWGSGDPEAEGPGGAPSPCNNLSPE) form a disordered region.

As to quaternary structure, efficient DNA binding requires dimerization with another bHLH protein. Heterodimer; forms a heterodimer with ARNT, ARNT2 or BMAL1. In terms of processing, ubiquitinated, leading to degradation by the proteosome. As to expression, brain.

It localises to the nucleus. Its function is as follows. Transcription factor expressed in neurons of the brain that regulates the excitatory-inhibitory balance within neural circuits and is required for contextual memory in the hippocampus. Plays a key role in the structural and functional plasticity of neurons. Acts as an early-response transcription factor in both excitatory and inhibitory neurons, where it induces distinct but overlapping sets of late-response genes in these two types of neurons, allowing the synapses that form on inhibitory and excitatory neurons to be modified by neuronal activity in a manner specific to their function within a circuit, thereby facilitating appropriate circuit responses to sensory experience. In excitatory neurons, activates transcription of BDNF, which in turn controls the number of GABA-releasing synapses that form on excitatory neurons, thereby promoting an increased number of inhibitory synapses on excitatory neurons. In inhibitory neurons, regulates a distinct set of target genes that serve to increase excitatory input onto somatostatin neurons, probably resulting in enhanced feedback inhibition within cortical circuits. The excitatory and inhibitory balance in neurons affects a number of processes, such as short-term and long-term memory, acquisition of experience, fear memory, response to stress and social behavior. Acts as a regulator of dendritic spine development in olfactory bulb granule cells in a sensory-experience-dependent manner by regulating expression of MDM2. Efficient DNA binding requires dimerization with another bHLH protein, such as ARNT, ARNT2 or BMAL1. Can activate the CME (CNS midline enhancer) element. The sequence is that of Neuronal PAS domain-containing protein 4 from Homo sapiens (Human).